The sequence spans 362 residues: Lipoprotein p35 (362 aa).

The signal sequence occupies residues M1–S30. C31 is lipidated: N-palmitoyl cysteine. C31 carries the S-diacylglycerol cysteine lipid modification. The tract at residues S33–Q53 is disordered.

The protein belongs to the p35 lipoprotein family. Post-translationally, the N-terminus is blocked.

It localises to the cell membrane. Its function is as follows. Major M.penetrans antigen. This chain is Lipoprotein p35, found in Malacoplasma penetrans (strain HF-2) (Mycoplasma penetrans).